The primary structure comprises 369 residues: Ribosome-interacting GTPase 1 (369 aa).

Position 2 is an N-acetylserine (Ser-2). The region spanning Ala-66–Asn-292 is the OBG-type G domain. GTP-binding positions include Gly-72 to Ser-79, Asp-118 to Ile-122, and Asn-250 to Asp-253. The 77-residue stretch at Asn-292–Lys-368 folds into the TGS domain.

This sequence belongs to the TRAFAC class OBG-HflX-like GTPase superfamily. OBG GTPase family. Associates with translating polyribosomes. Interacts with GIR2, TMA46, YAP1 and YGR250C.

It is found in the cytoplasm. In terms of biological role, involved in ribosomal function. This chain is Ribosome-interacting GTPase 1 (RBG1), found in Saccharomyces cerevisiae (strain ATCC 204508 / S288c) (Baker's yeast).